Consider the following 95-residue polypeptide: Aspartyl/glutamyl-tRNA(Asn/Gln) amidotransferase subunit C (95 aa).

The protein belongs to the GatC family. In terms of assembly, heterotrimer of A, B and C subunits.

It carries out the reaction L-glutamyl-tRNA(Gln) + L-glutamine + ATP + H2O = L-glutaminyl-tRNA(Gln) + L-glutamate + ADP + phosphate + H(+). The catalysed reaction is L-aspartyl-tRNA(Asn) + L-glutamine + ATP + H2O = L-asparaginyl-tRNA(Asn) + L-glutamate + ADP + phosphate + 2 H(+). Its function is as follows. Allows the formation of correctly charged Asn-tRNA(Asn) or Gln-tRNA(Gln) through the transamidation of misacylated Asp-tRNA(Asn) or Glu-tRNA(Gln) in organisms which lack either or both of asparaginyl-tRNA or glutaminyl-tRNA synthetases. The reaction takes place in the presence of glutamine and ATP through an activated phospho-Asp-tRNA(Asn) or phospho-Glu-tRNA(Gln). The polypeptide is Aspartyl/glutamyl-tRNA(Asn/Gln) amidotransferase subunit C (Bartonella henselae (strain ATCC 49882 / DSM 28221 / CCUG 30454 / Houston 1) (Rochalimaea henselae)).